A 343-amino-acid chain; its full sequence is Probable dual-specificity RNA methyltransferase RlmN (343 aa).

E83 functions as the Proton acceptor in the catalytic mechanism. The region spanning 89–323 (YLDRKTICVS…VSVRRSRGKD (235 aa)) is the Radical SAM core domain. C96 and C328 are disulfide-bonded. [4Fe-4S] cluster-binding residues include C103, C107, and C110. S-adenosyl-L-methionine is bound by residues 153 to 154 (GE), S185, 209 to 211 (SLH), and N285. C328 functions as the S-methylcysteine intermediate in the catalytic mechanism.

It belongs to the radical SAM superfamily. RlmN family. The cofactor is [4Fe-4S] cluster.

The protein resides in the cytoplasm. The enzyme catalyses adenosine(2503) in 23S rRNA + 2 reduced [2Fe-2S]-[ferredoxin] + 2 S-adenosyl-L-methionine = 2-methyladenosine(2503) in 23S rRNA + 5'-deoxyadenosine + L-methionine + 2 oxidized [2Fe-2S]-[ferredoxin] + S-adenosyl-L-homocysteine. It carries out the reaction adenosine(37) in tRNA + 2 reduced [2Fe-2S]-[ferredoxin] + 2 S-adenosyl-L-methionine = 2-methyladenosine(37) in tRNA + 5'-deoxyadenosine + L-methionine + 2 oxidized [2Fe-2S]-[ferredoxin] + S-adenosyl-L-homocysteine. Its function is as follows. Specifically methylates position 2 of adenine 2503 in 23S rRNA and position 2 of adenine 37 in tRNAs. The protein is Probable dual-specificity RNA methyltransferase RlmN of Deinococcus deserti (strain DSM 17065 / CIP 109153 / LMG 22923 / VCD115).